A 132-amino-acid chain; its full sequence is Small ribosomal subunit protein uS8 (132 aa).

The protein belongs to the universal ribosomal protein uS8 family. Part of the 30S ribosomal subunit. Contacts proteins S5 and S12.

Its function is as follows. One of the primary rRNA binding proteins, it binds directly to 16S rRNA central domain where it helps coordinate assembly of the platform of the 30S subunit. This chain is Small ribosomal subunit protein uS8, found in Anoxybacillus flavithermus (strain DSM 21510 / WK1).